Here is a 555-residue protein sequence, read N- to C-terminus: MRSDQIKKGLKQAPARAMLRAVGVGDEDFGRPFVGVVNTFTDGMPCNFHLRELAQHLKAGLREAGLFPFEFGAPAISDGISMGTPGMRASLVSREVIADSVELIAQGYLYDGMVGLSACDKTIPGTAMGVIRSGVPGMVLYGGTIAPGEWQGRKLTIVEVFEAVGQRAAGKISEEELLEIERRAIPGPGACGGQYTANTMAMALEALGLSPVGYNAIPAVHPEKERATKEAGKILAWAIAHDWKPKDFLTRKSFLNAVAAVAATGGSTNAVLHLLALAKEAGVELSLDDFDQISRKTPVIADLRPWGTYTAWELYEAGGTALVFKRLLEAGLLFGEEKTLTGRTLAEEVERAYREQEGQKVVFPVEKALKPHGGLVVLKGNLAPQGAVLKLAGTERTSFEGPARVFDSEEAAMEKVLKGEIRPGDVVVIRYVGPKGAPGMPEMLSVTSAIVGEGLGPEVALLTDGRFSGGTRGLMIGHIAPEAFVGGPIALLEEGDRIRIDVEGRRLEVLLPEEELERRRARWRPRPPAFTHGLFARYAALVRQADEGAVLEDPL.

C46 lines the [2Fe-2S] cluster pocket. D78 provides a ligand contact to Mg(2+). C119 contributes to the [2Fe-2S] cluster binding site. Mg(2+)-binding residues include D120 and K121. Position 121 is an N6-carboxylysine (K121). C191 provides a ligand contact to [2Fe-2S] cluster. E442 serves as a coordination point for Mg(2+). S468 acts as the Proton acceptor in catalysis.

This sequence belongs to the IlvD/Edd family. As to quaternary structure, homodimer. Requires [2Fe-2S] cluster as cofactor. Mg(2+) serves as cofactor.

The catalysed reaction is (2R)-2,3-dihydroxy-3-methylbutanoate = 3-methyl-2-oxobutanoate + H2O. It catalyses the reaction (2R,3R)-2,3-dihydroxy-3-methylpentanoate = (S)-3-methyl-2-oxopentanoate + H2O. It participates in amino-acid biosynthesis; L-isoleucine biosynthesis; L-isoleucine from 2-oxobutanoate: step 3/4. Its pathway is amino-acid biosynthesis; L-valine biosynthesis; L-valine from pyruvate: step 3/4. Its function is as follows. Functions in the biosynthesis of branched-chain amino acids. Catalyzes the dehydration of (2R,3R)-2,3-dihydroxy-3-methylpentanoate (2,3-dihydroxy-3-methylvalerate) into 2-oxo-3-methylpentanoate (2-oxo-3-methylvalerate) and of (2R)-2,3-dihydroxy-3-methylbutanoate (2,3-dihydroxyisovalerate) into 2-oxo-3-methylbutanoate (2-oxoisovalerate), the penultimate precursor to L-isoleucine and L-valine, respectively. The protein is Dihydroxy-acid dehydratase of Thermus thermophilus (strain ATCC BAA-163 / DSM 7039 / HB27).